A 365-amino-acid polypeptide reads, in one-letter code: MDRAIQSPGKYVQGADALQRLGDYLKPLADSWLVIADKFVLGFAEDTIRQSLSKAGLAMDIVAFNGECSQGEVDRLCQLATQNGRSAIVGIGGGKTLDTAKAVAFFQKVPVAVAPTIASTDAPCSALSVLYTDEGEFDRYLMLPTNPALVVVDTAIVARAPARLLAAGIGDALATWFEARAASRSSAATMAGGPATQTALNLARFCYDTLLEEGEKAMLAVQAQVVTPALERIVEANTYLSGVGFESGGVAAAHAVHNGLTAVAETHHFYHGEKVAFGVLVQLALENASNAEMQEVMSLCHAVGLPITLAQLDITEDIPTKMRAVAELACAPGETIHNMPGGVTVEQVYGALLVADQLGQHFLEF.

NAD(+) contacts are provided by Asp37, Gly94, Lys95, Thr116, and Ser119. Asp121 is a glycerol binding site. Positions 125, 127, and 131 each coordinate NAD(+). Zn(2+) is bound by residues Asp171, His254, and His271. Residue His254 participates in glycerol binding.

Belongs to the iron-containing alcohol dehydrogenase family. Zn(2+) is required as a cofactor.

The enzyme catalyses glycerol + NAD(+) = dihydroxyacetone + NADH + H(+). It functions in the pathway polyol metabolism; glycerol fermentation; glycerone phosphate from glycerol (oxidative route): step 1/2. In terms of biological role, catalyzes the NAD-dependent oxidation of glycerol to dihydroxyacetone (glycerone). Allows microorganisms to utilize glycerol as a source of carbon under anaerobic conditions. The protein is Glycerol dehydrogenase (gldA) of Pseudomonas putida (Arthrobacter siderocapsulatus).